The following is a 416-amino-acid chain: D-amino acid dehydrogenase (416 aa).

An FAD-binding site is contributed by 3–17; the sequence is ITILGSGVIGVTTAY.

It belongs to the DadA oxidoreductase family. FAD is required as a cofactor.

The enzyme catalyses a D-alpha-amino acid + A + H2O = a 2-oxocarboxylate + AH2 + NH4(+). In terms of biological role, oxidative deamination of D-amino acids. The polypeptide is D-amino acid dehydrogenase (Brucella suis biovar 1 (strain 1330)).